The primary structure comprises 118 residues: D-dopachrome decarboxylase (118 aa).

P2 carries the N-acetylproline modification. K33 carries the post-translational modification N6-acetyllysine.

This sequence belongs to the MIF family. In terms of assembly, homotrimer. In terms of tissue distribution, highly expressed in the liver and at lower levels in the heart, lung and pancreas.

Its subcellular location is the cytoplasm. It catalyses the reaction D-dopachrome + H(+) = 5,6-dihydroxyindole + CO2. Tautomerization of D-dopachrome with decarboxylation to give 5,6-dihydroxyindole (DHI). The sequence is that of D-dopachrome decarboxylase (DDT) from Homo sapiens (Human).